Consider the following 396-residue polypeptide: Cathepsin D (396 aa).

A signal peptide spans 1–18; sequence MKMLLLCVFSALALTNDA. A propeptide spans 19-61 (activation peptide); that stretch reads LVRIPLKKFRSIRRQLTDSGKRAEELLADHHSLKYNLSFPASN. A Peptidase A1 domain is found at 76 to 393; it reads YYGEIGLGTP…DRDANRVGFA (318 aa). Residue aspartate 94 is part of the active site. Cysteines 107 and 114 form a disulfide. Residues asparagine 131 and asparagine 249 are each glycosylated (N-linked (GlcNAc...) asparagine). Cysteine 272 and cysteine 276 are disulfide-bonded. Residue aspartate 281 is part of the active site. A disulfide bond links cysteine 315 and cysteine 352.

This sequence belongs to the peptidase A1 family. Monomer.

It localises to the lysosome. The catalysed reaction is Specificity similar to, but narrower than, that of pepsin A. Does not cleave the 4-Gln-|-His-5 bond in B chain of insulin.. Its activity is regulated as follows. Inhibited by pepstatin. Its function is as follows. Acid protease active in intracellular protein breakdown. In Chionodraco hamatus (Antarctic teleost icefish), this protein is Cathepsin D (ctsd).